Here is a 274-residue protein sequence, read N- to C-terminus: Penicillin-insensitive murein endopeptidase (274 aa).

The first 19 residues, 1-19, serve as a signal peptide directing secretion; sequence MKKTAIALLAWFVSSASLA. Cystine bridges form between cysteine 44–cysteine 265, cysteine 187–cysteine 235, and cysteine 216–cysteine 223. The Zn(2+) site is built by histidine 110, histidine 113, aspartate 120, aspartate 147, histidine 150, and histidine 211. The interval 225 to 274 is disordered; that stretch reads DQPLPPPGDGCGAELQSWFEPPKLGTTKPEKKTPPPLPPSCQALLDEHVL.

Belongs to the peptidase M74 family. Dimer. It depends on Zn(2+) as a cofactor.

It is found in the periplasm. In terms of biological role, murein endopeptidase that cleaves the D-alanyl-meso-2,6-diamino-pimelyl amide bond that connects peptidoglycan strands. Likely plays a role in the removal of murein from the sacculus. This is Penicillin-insensitive murein endopeptidase from Salmonella paratyphi B (strain ATCC BAA-1250 / SPB7).